A 609-amino-acid chain; its full sequence is 2',5'-phosphodiesterase 12 (609 aa).

A mitochondrion-targeting transit peptide spans 1–42 (MWRLPGARAALRVIRTAVEKLSRAEAGSQTAAGAMERAVVRC). Residues 89–99 (AAAAKKSRKSR) show a composition bias toward basic residues. 2 disordered regions span residues 89–111 (AAAA…CSGP) and 206–230 (AEPE…ETDV). Low complexity-rich tracts occupy residues 100–111 (PNASGGAACSGP) and 213–224 (PSSLSPSSPSSS). Ser217 bears the Phosphoserine mark. 3 residues coordinate Mg(2+): Glu351, Asp496, and Asn498. Asp496 acts as the Proton donor/acceptor in catalysis.

The protein belongs to the CCR4/nocturin family. The cofactor is Mg(2+). Ubiquitous.

It is found in the mitochondrion matrix. The enzyme catalyses Exonucleolytic cleavage of poly(A) to 5'-AMP.. In terms of biological role, enzyme that cleaves 2',5'-phosphodiester bond linking adenosines of the 5'-triphosphorylated oligoadenylates, triphosphorylated oligoadenylates referred as 2-5A modulates the 2-5A system. Degrades triphosphorylated 2-5A to produce AMP and ATP. Also cleaves 3',5'-phosphodiester bond of oligoadenylates. Plays a role as a negative regulator of the 2-5A system that is one of the major pathways for antiviral and antitumor functions induced by interferons (IFNs). Suppression of this enzyme increases cellular 2-5A levels and decreases viral replication in cultured small-airway epithelial cells and Hela cells. The polypeptide is 2',5'-phosphodiesterase 12 (PDE12) (Homo sapiens (Human)).